Here is a 216-residue protein sequence, read N- to C-terminus: Probable transaldolase (216 aa).

Lysine 83 acts as the Schiff-base intermediate with substrate in catalysis.

The protein belongs to the transaldolase family. Type 3B subfamily.

It localises to the cytoplasm. It catalyses the reaction D-sedoheptulose 7-phosphate + D-glyceraldehyde 3-phosphate = D-erythrose 4-phosphate + beta-D-fructose 6-phosphate. Its pathway is carbohydrate degradation; pentose phosphate pathway; D-glyceraldehyde 3-phosphate and beta-D-fructose 6-phosphate from D-ribose 5-phosphate and D-xylulose 5-phosphate (non-oxidative stage): step 2/3. In terms of biological role, transaldolase is important for the balance of metabolites in the pentose-phosphate pathway. The chain is Probable transaldolase from Sphingopyxis alaskensis (strain DSM 13593 / LMG 18877 / RB2256) (Sphingomonas alaskensis).